Consider the following 239-residue polypeptide: Transcriptional activatory protein AadR (239 aa).

An a nucleoside 3',5'-cyclic phosphate-binding site is contributed by 27-149; that stretch reads ICGELGPADH…FATRELSLAQ (123 aa). Positions 158 to 231 constitute an HTH crp-type domain; that stretch reads RSAEEKVAAF…PDGVRVLDPK (74 aa). The segment at residues 191–210 is a DNA-binding region (H-T-H motif); that stretch reads RQDIADFLGLTIETVSRTFT.

Its function is as follows. Transcriptional activator of anaerobic gene expression. For aromatic acid degradation. Also required for the anaerobic degradation of benzoate. This Rhodopseudomonas palustris (strain ATCC BAA-98 / CGA009) protein is Transcriptional activatory protein AadR (aadR).